Reading from the N-terminus, the 466-residue chain is CCA-adding enzyme (466 aa).

Positions 55 and 58 each coordinate ATP. Residues S55 and R58 each coordinate CTP. Residues D67, D69, and D118 each contribute to the Mg(2+) site. The ATP site is built by H141, K161, and Y170. CTP contacts are provided by H141, K161, and Y170.

It belongs to the tRNA nucleotidyltransferase/poly(A) polymerase family. Archaeal CCA-adding enzyme subfamily. Homodimer. The cofactor is Mg(2+).

The catalysed reaction is a tRNA precursor + 2 CTP + ATP = a tRNA with a 3' CCA end + 3 diphosphate. The enzyme catalyses a tRNA with a 3' CCA end + 2 CTP + ATP = a tRNA with a 3' CCACCA end + 3 diphosphate. Functionally, catalyzes the addition and repair of the essential 3'-terminal CCA sequence in tRNAs without using a nucleic acid template. Adds these three nucleotides in the order of C, C, and A to the tRNA nucleotide-73, using CTP and ATP as substrates and producing inorganic pyrophosphate. tRNA 3'-terminal CCA addition is required both for tRNA processing and repair. Also involved in tRNA surveillance by mediating tandem CCA addition to generate a CCACCA at the 3' terminus of unstable tRNAs. While stable tRNAs receive only 3'-terminal CCA, unstable tRNAs are marked with CCACCA and rapidly degraded. This Haloarcula marismortui (strain ATCC 43049 / DSM 3752 / JCM 8966 / VKM B-1809) (Halobacterium marismortui) protein is CCA-adding enzyme.